We begin with the raw amino-acid sequence, 780 residues long: Subtilisin-like protease SBT5.1 (780 aa).

The N-terminal stretch at 1–25 (MMRCLTITIMFFMFFFLSVIQKCKS) is a signal peptide. Positions 26–106 (ETSKSGDYII…VFPDQMLQLH (81 aa)) are cleaved as a propeptide — activation peptide. One can recognise an Inhibitor I9 domain in the interval 33-106 (YIIYMGAASS…VFPDQMLQLH (74 aa)). The 508-residue stretch at 110–617 (SWDFLVQESY…AGQVTIFGPS (508 aa)) folds into the Peptidase S8 domain. Catalysis depends on aspartate 147, which acts as the Charge relay system. N-linked (GlcNAc...) asparagine glycosylation is present at asparagine 197. The active-site Charge relay system is histidine 215. Residue asparagine 230 is glycosylated (N-linked (GlcNAc...) asparagine). The region spanning 385–469 (IDANEEAARN…PEDGIQIMSY (85 aa)) is the PA domain. Asparagine 471 is a glycosylation site (N-linked (GlcNAc...) asparagine). The active-site Charge relay system is the serine 550. Asparagine 776 carries N-linked (GlcNAc...) asparagine glycosylation.

Belongs to the peptidase S8 family.

It localises to the secreted. The protein is Subtilisin-like protease SBT5.1 of Arabidopsis thaliana (Mouse-ear cress).